Reading from the N-terminus, the 103-residue chain is Putative glutaredoxin-C12 (103 aa).

The 102-residue stretch at 1–102 (MERVRDLASE…QMLKASNAIW (102 aa)) folds into the Glutaredoxin domain. The cysteines at positions 21 and 24 are disulfide-linked.

It belongs to the glutaredoxin family. CC-type subfamily.

The protein localises to the cytoplasm. Has a glutathione-disulfide oxidoreductase activity in the presence of NADPH and glutathione reductase. Reduces low molecular weight disulfides and proteins. The chain is Putative glutaredoxin-C12 (GRXC12) from Arabidopsis thaliana (Mouse-ear cress).